We begin with the raw amino-acid sequence, 367 residues long: Pectate lyase 1 (367 aa).

Residues 1–21 (MASPCLIAVLVFLCAIVSCYS) form the signal peptide. A disulfide bridge connects residues C28 and C45. The segment at 38-305 (NRMKLADCAV…YKKEVTKRIG (268 aa)) is beta-helix. The segment at 92-104 (IFSQNMNIKLKMP) is igE-binding. Binds to IgE in 5 out of 7 patients tested. A disulfide bridge links C128 with C147. A glycan (N-linked (GlcNAc...) asparagine) is linked at N148. Residue D170 coordinates Ca(2+). The N-linked (GlcNAc...) asparagine glycan is linked to N178. Residues D194 and D198 each contribute to the Ca(2+) site. The tract at residues 239–250 (AFNQFGPNAGQR) is igE-binding. Binds to IgE in 6 out of 7 patients tested. Residue R250 is part of the active site. Residues 251 to 258 (MPRARYGL) are igE-binding. Binds to IgE in 5 out of 7 patients tested. C306 and C312 are disulfide-bonded. Residues 317–327 (WRSTRDAFING) are igE-binding. Binds to IgE in 3 out of 7 patients tested.

The protein belongs to the polysaccharide lyase 1 family. Amb a subfamily. Ca(2+) serves as cofactor. Post-translationally, N-glycosylated; consists of complex-type N-glycans containing the Lewis a antigen (Galbeta1-3(Fucalpha1-4)GlcNAcbeta1-). In terms of tissue distribution, expressed in pollen (at protein level).

It carries out the reaction Eliminative cleavage of (1-&gt;4)-alpha-D-galacturonan to give oligosaccharides with 4-deoxy-alpha-D-galact-4-enuronosyl groups at their non-reducing ends.. Its pathway is glycan metabolism; pectin degradation; 2-dehydro-3-deoxy-D-gluconate from pectin: step 2/5. Functionally, has low pectate lyase activity. The chain is Pectate lyase 1 from Juniperus ashei (Ozark white cedar).